The following is a 122-amino-acid chain: MIQQESRLKVADNSGAREILVIKILGGSRVKTGNIGDIIVATVKQATPGGVVKKGDVVKAVVVRTKHGLHRKDGSYIKFDENAAVLINNDKSPKGTRIFGPIARELRDDDYMKIISLAPEVL.

The protein belongs to the universal ribosomal protein uL14 family. Part of the 50S ribosomal subunit. Forms a cluster with proteins L3 and L19. In the 70S ribosome, L14 and L19 interact and together make contacts with the 16S rRNA in bridges B5 and B8.

In terms of biological role, binds to 23S rRNA. Forms part of two intersubunit bridges in the 70S ribosome. The protein is Large ribosomal subunit protein uL14 of Limosilactobacillus fermentum (strain NBRC 3956 / LMG 18251) (Lactobacillus fermentum).